The chain runs to 641 residues: Threonine--tRNA ligase (641 aa).

A TGS domain is found at Met1–Thr61. A catalytic region spans residues Asp243–Pro536. Residues Cys336, His387, and His513 each contribute to the Zn(2+) site.

It belongs to the class-II aminoacyl-tRNA synthetase family. Homodimer. Zn(2+) is required as a cofactor.

It is found in the cytoplasm. It catalyses the reaction tRNA(Thr) + L-threonine + ATP = L-threonyl-tRNA(Thr) + AMP + diphosphate + H(+). Catalyzes the attachment of threonine to tRNA(Thr) in a two-step reaction: L-threonine is first activated by ATP to form Thr-AMP and then transferred to the acceptor end of tRNA(Thr). Also edits incorrectly charged L-seryl-tRNA(Thr). This is Threonine--tRNA ligase from Gluconacetobacter diazotrophicus (strain ATCC 49037 / DSM 5601 / CCUG 37298 / CIP 103539 / LMG 7603 / PAl5).